The chain runs to 308 residues: Phosphoribosylaminoimidazole-succinocarboxamide synthase (308 aa).

This sequence belongs to the SAICAR synthetase family.

The catalysed reaction is 5-amino-1-(5-phospho-D-ribosyl)imidazole-4-carboxylate + L-aspartate + ATP = (2S)-2-[5-amino-1-(5-phospho-beta-D-ribosyl)imidazole-4-carboxamido]succinate + ADP + phosphate + 2 H(+). The protein operates within purine metabolism; IMP biosynthesis via de novo pathway; 5-amino-1-(5-phospho-D-ribosyl)imidazole-4-carboxamide from 5-amino-1-(5-phospho-D-ribosyl)imidazole-4-carboxylate: step 1/2. The polypeptide is Phosphoribosylaminoimidazole-succinocarboxamide synthase (Xanthomonas oryzae pv. oryzae (strain PXO99A)).